We begin with the raw amino-acid sequence, 164 residues long: Protein SprT (164 aa).

The region spanning 14–156 is the SprT-like domain; that stretch reads QQAETFFKRP…LCRRCREILV (143 aa). His-69 is a Zn(2+) binding site. Residue Glu-70 is part of the active site. His-73 is a binding site for Zn(2+).

This sequence belongs to the SprT family. Zn(2+) is required as a cofactor.

The protein resides in the cytoplasm. This chain is Protein SprT, found in Pseudomonas entomophila (strain L48).